We begin with the raw amino-acid sequence, 513 residues long: ATP synthase subunit alpha (513 aa).

Residue 169-176 (GDRQIGKT) coordinates ATP.

It belongs to the ATPase alpha/beta chains family. F-type ATPases have 2 components, CF(1) - the catalytic core - and CF(0) - the membrane proton channel. CF(1) has five subunits: alpha(3), beta(3), gamma(1), delta(1), epsilon(1). CF(0) has three main subunits: a(1), b(2) and c(9-12). The alpha and beta chains form an alternating ring which encloses part of the gamma chain. CF(1) is attached to CF(0) by a central stalk formed by the gamma and epsilon chains, while a peripheral stalk is formed by the delta and b chains.

Its subcellular location is the cell inner membrane. The catalysed reaction is ATP + H2O + 4 H(+)(in) = ADP + phosphate + 5 H(+)(out). Its function is as follows. Produces ATP from ADP in the presence of a proton gradient across the membrane. The alpha chain is a regulatory subunit. This chain is ATP synthase subunit alpha, found in Francisella tularensis subsp. holarctica (strain OSU18).